Here is a 156-residue protein sequence, read N- to C-terminus: Small ribosomal subunit protein uS7 (156 aa).

Belongs to the universal ribosomal protein uS7 family. In terms of assembly, part of the 30S ribosomal subunit. Contacts proteins S9 and S11.

Its function is as follows. One of the primary rRNA binding proteins, it binds directly to 16S rRNA where it nucleates assembly of the head domain of the 30S subunit. Is located at the subunit interface close to the decoding center, probably blocks exit of the E-site tRNA. The chain is Small ribosomal subunit protein uS7 from Idiomarina loihiensis (strain ATCC BAA-735 / DSM 15497 / L2-TR).